The sequence spans 120 residues: Large ribosomal subunit protein uL18 (120 aa).

It belongs to the universal ribosomal protein uL18 family. As to quaternary structure, part of the 50S ribosomal subunit; part of the 5S rRNA/L5/L18/L25 subcomplex. Contacts the 5S and 23S rRNAs.

In terms of biological role, this is one of the proteins that bind and probably mediate the attachment of the 5S RNA into the large ribosomal subunit, where it forms part of the central protuberance. This is Large ribosomal subunit protein uL18 from Rhodospirillum centenum (strain ATCC 51521 / SW).